Here is a 343-residue protein sequence, read N- to C-terminus: L-threonine 3-dehydrogenase (343 aa).

Cys38 contacts Zn(2+). Residues Thr40 and His43 each act as charge relay system in the active site. Zn(2+)-binding residues include His63, Glu64, Cys93, Cys96, Cys99, and Cys107. NAD(+) contacts are provided by residues Ile175, Asp195, Arg200, 262–264 (LGI), and 286–287 (IY).

This sequence belongs to the zinc-containing alcohol dehydrogenase family. Homotetramer. Requires Zn(2+) as cofactor.

It localises to the cytoplasm. It carries out the reaction L-threonine + NAD(+) = (2S)-2-amino-3-oxobutanoate + NADH + H(+). Its pathway is amino-acid degradation; L-threonine degradation via oxydo-reductase pathway; glycine from L-threonine: step 1/2. In terms of biological role, catalyzes the NAD(+)-dependent oxidation of L-threonine to 2-amino-3-ketobutyrate. This Paraburkholderia phytofirmans (strain DSM 17436 / LMG 22146 / PsJN) (Burkholderia phytofirmans) protein is L-threonine 3-dehydrogenase.